The chain runs to 383 residues: Delta(12)-fatty-acid desaturase (383 aa).

A disordered region spans residues 1–24 (MGAGGRMPVPTSSKKSETDTTKRV). Residues 14-24 (KKSETDTTKRV) are compositionally biased toward basic and acidic residues. Residues 56-76 (LISDIIIASCFYYVATNYFSL) form a helical membrane-spanning segment. Positions 105–109 (HECGH) match the Histidine box-1 motif. The chain crosses the membrane as a helical span at residues 117–137 (WLDDTVGLIFHSFLLVPYFSW). The Histidine box-2 signature appears at 141-145 (HRRHH). 3 consecutive transmembrane segments (helical) span residues 179–199 (IMMLTVQFVLGWPLYLAFNVS), 225–245 (IYLSDAGILAVCFGLYRYAAA), and 252–272 (ICLYGVPLLIVNAFLVLITYL). Residues 315–319 (HVAHH) carry the Histidine box-3 motif.

This sequence belongs to the fatty acid desaturase type 1 family. In terms of assembly, homo- and heterodimer. Interacts with FAD3 but not with FAD6. FAD2-FAD3 heterodimers can form a metabolic channel in which 18:1-PC is converted to 18:3-PC without releasing a free 18:2-PC intermediate. Expressed in shoots and roots. Expressed in leaves, stems, flowers and siliques.

Its subcellular location is the endoplasmic reticulum membrane. It localises to the microsome membrane. The enzyme catalyses (9Z)-octadecenoyl-CoA + 2 Fe(II)-[cytochrome b5] + O2 + 2 H(+) = (9Z,12Z)-octadecadienoyl-CoA + 2 Fe(III)-[cytochrome b5] + 2 H2O. It carries out the reaction (9Z)-hexadecenoyl-CoA + 2 Fe(II)-[cytochrome b5] + O2 + 2 H(+) = (9Z,12Z)-hexadecadienoyl-CoA + 2 Fe(III)-[cytochrome b5] + 2 H2O. The catalysed reaction is a (9Z)-octadecenoyl-containing glycerolipid + 2 Fe(II)-[cytochrome b5] + O2 + 2 H(+) = a (9Z,12Z)-octadecadienoyl-containing glycerolipid + 2 Fe(III)-[cytochrome b5] + 2 H2O. It catalyses the reaction (9Z)-octadecenoyl-CoA + AH2 + O2 = (9Z,12Z)-octadecadienoyl-CoA + A + 2 H2O. The enzyme catalyses (9Z)-hexadecenoyl-CoA + AH2 + O2 = (9Z,12Z)-hexadecadienoyl-CoA + A + 2 H2O. It carries out the reaction (9Z)-tetradecenoyl-CoA + 2 Fe(II)-[cytochrome b5] + O2 + 2 H(+) = (9Z,12Z)-tetradecadienoyl-CoA + 2 Fe(III)-[cytochrome b5] + 2 H2O. The catalysed reaction is (9Z)-pentadecenoyl-CoA + 2 Fe(II)-[cytochrome b5] + O2 + 2 H(+) = (9Z,12Z)-pentadecadienoyl-CoA + 2 Fe(III)-[cytochrome b5] + 2 H2O. It catalyses the reaction (9Z)-heptadecenoyl-CoA + 2 Fe(II)-[cytochrome b5] + O2 + 2 H(+) = (9Z,12Z)-heptadecadienoyl-CoA + 2 Fe(III)-[cytochrome b5] + 2 H2O. It functions in the pathway lipid metabolism; polyunsaturated fatty acid biosynthesis. Its function is as follows. ER (microsomal) omega-6 fatty acid desaturase introduces the second double bond in the biosynthesis of 18:3 fatty acids, important constituents of plant membranes. Delta(12)-desaturase with regioselectivity determined by the double bond (delta(9) position) and carboxyl group of the substrate. Can use both 16:1 and 18:1 fatty acids as substrates. It is thought to use cytochrome b5 as an electron donor and to act on fatty acids esterified to phosphatidylcholine (PC) and, possibly, other phospholipids. Very low constitutive hydroxylation activity. Required for desaturation of fatty acids present in extraplastidial membranes, including mitochondria. Required for salt tolerance during seed germination and early seedling growth. The polypeptide is Delta(12)-fatty-acid desaturase (Arabidopsis thaliana (Mouse-ear cress)).